We begin with the raw amino-acid sequence, 1150 residues long: ATP-dependent helicase/deoxyribonuclease subunit B (1150 aa).

Residue 8–15 (GRAGSGKS) coordinates ATP. 4 residues coordinate [4Fe-4S] cluster: cysteine 786, cysteine 1106, cysteine 1109, and cysteine 1115.

It belongs to the helicase family. AddB/RexB type 1 subfamily. Heterodimer of AddA and AddB. Requires Mg(2+) as cofactor. [4Fe-4S] cluster serves as cofactor.

In terms of biological role, the heterodimer acts as both an ATP-dependent DNA helicase and an ATP-dependent, dual-direction single-stranded exonuclease. Recognizes the chi site generating a DNA molecule suitable for the initiation of homologous recombination. The AddB subunit has 5' -&gt; 3' nuclease activity but not helicase activity. The chain is ATP-dependent helicase/deoxyribonuclease subunit B from Clostridium botulinum (strain Hall / ATCC 3502 / NCTC 13319 / Type A).